Consider the following 572-residue polypeptide: Transcription factor E3 (572 aa).

Ser47 bears the Phosphoserine; by MTOR mark. The segment covering 87–125 (TTPATLSASSSAGGSRTPAMSSSSSRVLLRQQLMRAQAQ) has biased composition (low complexity). The tract at residues 87–152 (TTPATLSASS…SPAPASPAIS (66 aa)) is disordered. The segment covering 126 to 135 (EQERRERREQ) has biased composition (basic and acidic residues). The residue at position 187 (Arg187) is an Asymmetric dimethylarginine. The interval 210-248 (LASQALTPPPGPSSAQPLPAPETAHATGPTGSAPNSPMA) is disordered. Residues 259 to 270 (EIDDVIDEIISL) are strong transcription activation domain. At Ser320 the chain carries Phosphoserine; by MTOR. Lys338 is covalently cross-linked (Glycyl lysine isopeptide (Lys-Gly) (interchain with G-Cter in SUMO2)). One can recognise a bHLH domain in the interval 345–398 (QKKDNHNLIERRRRFNINDRIKELGTLIPKSNDPEMRWNKGTILKASVDYIRKL). The short motif at 355–358 (RRRR) is the Nuclear localization signal element. The leucine-zipper stretch occupies residues 408-429 (LESRQRSLEQANRSLQLRIQEL). Disordered stretches follow at residues 439–495 (PVPP…APPS) and 530–572 (VGGL…EEES). Low complexity predominate over residues 446–457 (LLSLTTSSVSDS). Phosphoserine is present on residues Ser539, Ser545, Ser551, Ser553, Ser557, and Ser565. A compositionally biased stretch (low complexity) spans 543 to 572 (AASDPLLSSVSPAVSKASSRRSSFSMEEES).

The protein belongs to the MiT/TFE family. Homodimer and heterodimer; with TFEB or MITF. Interacts with RRAGC/RagC GDP-bound and RRAGD/RagD GDP-bound; promoting its recruitment to lysosomal membrane in the presence of nutrients. Interacts with TSC22D1; the interaction is enhanced in the presence of TGF-beta. In terms of processing, sumoylated; does not affect dimerization with MITF. Post-translationally, phosphorylation ar Ser-47 and Ser-320 by MTOR via non-canonical mTORC1 pathway regulates its stability and subcellular location, respectively. When nutrients are present, phosphorylation by MTOR at Ser-47 promotes ubiquitination by the SCF(BTRC) complex, followed by degradation. When nutrients are present, phosphorylation by MTOR at Ser-320 also promotes association with 14-3-3/YWHA adapters and retention in the cytosol. Phosphorylation at Ser-47 plays a more critical role than phosphorylation at Ser-320 for TFE3 inactivation. Inhibition of mTORC1, starvation and lysosomal disruption, promotes dephosphorylation and transcription factor activity. Ubiquitinated by the SCF(BTRC) and SCF(FBXW11) complexes following phosphorylation at Ser-47 by MTOR, leading to its degradation by the proteasome. As to expression, widely expressed.

Its subcellular location is the cytoplasm. It localises to the cytosol. The protein resides in the nucleus. The protein localises to the lysosome membrane. Its function is as follows. Transcription factor that acts as a master regulator of lysosomal biogenesis and immune response. Specifically recognizes and binds E-box sequences (5'-CANNTG-3'); efficient DNA-binding requires dimerization with itself or with another MiT/TFE family member such as TFEB or MITF. Involved in the cellular response to amino acid availability by acting downstream of MTOR: in the presence of nutrients, TFE3 phosphorylation by MTOR promotes its inactivation. Upon starvation or lysosomal stress, inhibition of MTOR induces TFE3 dephosphorylation, resulting in transcription factor activity. Specifically recognizes and binds the CLEAR-box sequence (5'-GTCACGTGAC-3') present in the regulatory region of many lysosomal genes, leading to activate their expression, thereby playing a central role in expression of lysosomal genes. Maintains the pluripotent state of embryonic stem cells by promoting the expression of genes such as ESRRB; mTOR-dependent TFE3 cytosolic retention and inactivation promotes exit from pluripotency. Required to maintain the naive pluripotent state of hematopoietic stem cell; mTOR-dependent cytoplasmic retention of TFE3 promotes the exit of hematopoietic stem cell from pluripotency. TFE3 activity is also involved in the inhibition of neuronal progenitor differentiation. Acts as a positive regulator of browning of adipose tissue by promoting expression of target genes; mTOR-dependent phosphorylation promotes cytoplasmic retention of TFE3 and inhibits browning of adipose tissue. In association with TFEB, activates the expression of CD40L in T-cells, thereby playing a role in T-cell-dependent antibody responses in activated CD4(+) T-cells and thymus-dependent humoral immunity. Specifically recognizes the MUE3 box, a subset of E-boxes, present in the immunoglobulin enhancer. It also binds very well to a USF/MLTF site. Promotes TGF-beta-induced transcription of COL1A2; via its interaction with TSC22D1 at E-boxes in the gene proximal promoter. May regulate lysosomal positioning in response to nutrient deprivation by promoting the expression of PIP4P1. In Mus musculus (Mouse), this protein is Transcription factor E3.